The following is a 151-amino-acid chain: Probable cGMP 3',5'-cyclic phosphodiesterase subunit delta (151 aa).

Belongs to the PDE6D/unc-119 family. Interacts with Pde6.

It localises to the nucleus. The protein localises to the cytoplasm. In Drosophila persimilis (Fruit fly), this protein is Probable cGMP 3',5'-cyclic phosphodiesterase subunit delta.